The chain runs to 277 residues: Uridine-cytidine kinase 1 (277 aa).

Residues 1–10 (MASAGGGDCE) show a composition bias toward gly residues. The disordered stretch occupies residues 1–29 (MASAGGGDCEGAGPEADRPHQRPFLIGVS). 30–38 (GGTASGKST) serves as a coordination point for ATP. Residues D87, Y115, H120, R169, R178, and Q186 each coordinate substrate. D215 is a binding site for ATP. Residues 246-277 (RSHKRTFPEPGEHPAVLASGKRSHLESSSRPH) form a disordered region. Position 251 is a phosphothreonine (T251). A compositionally biased stretch (basic and acidic residues) spans 268-277 (SHLESSSRPH).

Belongs to the uridine kinase family.

The catalysed reaction is uridine + ATP = UMP + ADP + H(+). It catalyses the reaction cytidine + ATP = CMP + ADP + H(+). The protein operates within pyrimidine metabolism; CTP biosynthesis via salvage pathway; CTP from cytidine: step 1/3. Its pathway is pyrimidine metabolism; UMP biosynthesis via salvage pathway; UMP from uridine: step 1/1. Its function is as follows. Phosphorylates uridine and cytidine to uridine monophosphate and cytidine monophosphate. Does not phosphorylate deoxyribonucleosides or purine ribonucleosides. Can use ATP or GTP as a phosphate donor. The protein is Uridine-cytidine kinase 1 (UCK1) of Bos taurus (Bovine).